A 95-amino-acid chain; its full sequence is Defensin-like protein 247 (95 aa).

A signal peptide spans 1–24 (MKFAAIFLVTCVFFSLFSSNLSQG). Intrachain disulfides connect Cys37/Cys94, Cys48/Cys77, Cys56/Cys87, and Cys75/Cys89.

The protein belongs to the DEFL family.

It localises to the secreted. This chain is Defensin-like protein 247 (SCRL6), found in Arabidopsis thaliana (Mouse-ear cress).